The following is a 217-amino-acid chain: Small ribosomal subunit protein uS3 (217 aa).

The 69-residue stretch at 38-106 (IRQLIQTKLA…QVHINIVEIK (69 aa)) folds into the KH type-2 domain.

This sequence belongs to the universal ribosomal protein uS3 family. In terms of assembly, part of the 30S ribosomal subunit. Forms a tight complex with proteins S10 and S14.

Binds the lower part of the 30S subunit head. Binds mRNA in the 70S ribosome, positioning it for translation. This chain is Small ribosomal subunit protein uS3, found in Lactococcus lactis subsp. cremoris (strain MG1363).